A 317-amino-acid chain; its full sequence is Protoheme IX farnesyltransferase (317 aa).

8 helical membrane passes run 25 to 45 (FFAL…LVGM), 54 to 74 (PVIA…SGCL), 126 to 146 (LAAG…SMWL), 154 to 174 (IVIG…VVTG), 181 to 201 (LVLF…LALV), 227 to 244 (IVAY…PVAL), 249 to 271 (LIYG…QVYH), and 281 to 301 (AAMG…SALL).

The protein belongs to the UbiA prenyltransferase family. Protoheme IX farnesyltransferase subfamily.

Its subcellular location is the cell inner membrane. The catalysed reaction is heme b + (2E,6E)-farnesyl diphosphate + H2O = Fe(II)-heme o + diphosphate. Its pathway is porphyrin-containing compound metabolism; heme O biosynthesis; heme O from protoheme: step 1/1. Its function is as follows. Converts heme B (protoheme IX) to heme O by substitution of the vinyl group on carbon 2 of heme B porphyrin ring with a hydroxyethyl farnesyl side group. The polypeptide is Protoheme IX farnesyltransferase (Methylobacterium sp. (strain 4-46)).